Here is an 820-residue protein sequence, read N- to C-terminus: 1,4-alpha-glucan-branching enzyme, chloroplastic/amyloplastic (820 aa).

Positions 1–20 (MLCLTSSSSSAPAPLLPSLA) are enriched in low complexity. The disordered stretch occupies residues 1–28 (MLCLTSSSSSAPAPLLPSLADRPSPGIA). Residues 1 to 64 (MLCLTSSSSS…SVPATARKNK (64 aa)) constitute a chloroplast transit peptide. The (1,4-alpha-D-glucosyl)n site is built by Trp153 and Lys188. Asp409 acts as the Nucleophile in catalysis. Catalysis depends on Glu464, which acts as the Proton donor.

This sequence belongs to the glycosyl hydrolase 13 family. GlgB subfamily. In terms of assembly, monomer.

The protein localises to the plastid. Its subcellular location is the chloroplast. It is found in the amyloplast. The catalysed reaction is Transfers a segment of a (1-&gt;4)-alpha-D-glucan chain to a primary hydroxy group in a similar glucan chain.. The protein operates within glycan biosynthesis; starch biosynthesis. Catalyzes the formation of the alpha-1,6-glucosidic linkages in starch by scission of a 1,4-alpha-linked oligosaccharide from growing alpha-1,4-glucan chains and the subsequent attachment of the oligosaccharide to the alpha-1,6 position. The protein is 1,4-alpha-glucan-branching enzyme, chloroplastic/amyloplastic (SBE1) of Oryza sativa subsp. japonica (Rice).